A 135-amino-acid polypeptide reads, in one-letter code: Retinol-binding protein 1 (135 aa).

The important for interaction with STRA6 stretch occupies residues 22 to 32; it reads RALDVNVALRK. The all-trans-retinol site is built by lysine 41, methionine 63, and glutamine 109.

The protein belongs to the calycin superfamily. Fatty-acid binding protein (FABP) family. In terms of assembly, interacts (only as retinol-free apoprotein) with STRA6.

It localises to the cytoplasm. Its subcellular location is the lipid droplet. Its function is as follows. Cytoplasmic retinol-binding protein. Accepts retinol from the transport protein STRA6, and thereby contributes to retinol uptake, storage and retinoid homeostasis. The protein is Retinol-binding protein 1 (Rbp1) of Rattus norvegicus (Rat).